The chain runs to 318 residues: NADH-ubiquinone oxidoreductase chain 1 (318 aa).

8 helical membrane-spanning segments follow: residues 2 to 22, 70 to 90, 98 to 118, 140 to 160, 173 to 193, 217 to 237, 253 to 273, and 294 to 314; these read FTIN…FLTL, LYMA…TPLP, FNLG…SILW, ISYG…SGSF, WLLL…LAET, AGSF…MNAL, ELYT…FLWI, and LPLT…LSGI.

This sequence belongs to the complex I subunit 1 family.

It is found in the mitochondrion inner membrane. The catalysed reaction is a ubiquinone + NADH + 5 H(+)(in) = a ubiquinol + NAD(+) + 4 H(+)(out). Functionally, core subunit of the mitochondrial membrane respiratory chain NADH dehydrogenase (Complex I) that is believed to belong to the minimal assembly required for catalysis. Complex I functions in the transfer of electrons from NADH to the respiratory chain. The immediate electron acceptor for the enzyme is believed to be ubiquinone. This chain is NADH-ubiquinone oxidoreductase chain 1 (MT-ND1), found in Sapajus apella (Brown-capped capuchin).